The primary structure comprises 734 residues: Photosystem I P700 chlorophyll a apoprotein A2 (734 aa).

The next 8 helical transmembrane spans lie at isoleucine 46–alanine 69, leucine 135–glutamine 158, leucine 175–isoleucine 199, methionine 273–tyrosine 291, leucine 330–tyrosine 353, alanine 369–valine 395, alanine 417–histidine 439, and phenylalanine 517–valine 535. 2 residues coordinate [4Fe-4S] cluster: cysteine 559 and cysteine 568. A run of 2 helical transmembrane segments spans residues alanine 575–tryptophan 596 and leucine 643–isoleucine 665. Chlorophyll a contacts are provided by histidine 654, methionine 662, and tyrosine 670. Tryptophan 671 contributes to the phylloquinone binding site. The chain crosses the membrane as a helical span at residues leucine 707–alanine 727.

It belongs to the PsaA/PsaB family. In terms of assembly, the PsaA/B heterodimer binds the P700 chlorophyll special pair and subsequent electron acceptors. PSI consists of a core antenna complex that captures photons, and an electron transfer chain that converts photonic excitation into a charge separation. The eukaryotic PSI reaction center is composed of at least 11 subunits. P700 is a chlorophyll a/chlorophyll a' dimer, A0 is one or more chlorophyll a, A1 is one or both phylloquinones and FX is a shared 4Fe-4S iron-sulfur center. is required as a cofactor.

The protein resides in the plastid. It is found in the chloroplast thylakoid membrane. The enzyme catalyses reduced [plastocyanin] + hnu + oxidized [2Fe-2S]-[ferredoxin] = oxidized [plastocyanin] + reduced [2Fe-2S]-[ferredoxin]. PsaA and PsaB bind P700, the primary electron donor of photosystem I (PSI), as well as the electron acceptors A0, A1 and FX. PSI is a plastocyanin/cytochrome c6-ferredoxin oxidoreductase, converting photonic excitation into a charge separation, which transfers an electron from the donor P700 chlorophyll pair to the spectroscopically characterized acceptors A0, A1, FX, FA and FB in turn. Oxidized P700 is reduced on the lumenal side of the thylakoid membrane by plastocyanin or cytochrome c6. In Chlorella vulgaris (Green alga), this protein is Photosystem I P700 chlorophyll a apoprotein A2.